A 373-amino-acid chain; its full sequence is Chaperone protein DnaJ (373 aa).

The 65-residue stretch at 5–69 (DYYEVLGVNK…NKRVNYDQFG (65 aa)) folds into the J domain. A CR-type zinc finger spans residues 130 to 212 (GTKKEISIKK…CKGKGTENKT (83 aa)). Residues C143, C146, C160, C163, C186, C189, C200, and C203 each contribute to the Zn(2+) site. CXXCXGXG motif repeat units lie at residues 143–150 (CHTCNGDG), 160–167 (CSYCNGAG), 186–193 (CPKCEGSG), and 200–207 (CPTCKGKG).

The protein belongs to the DnaJ family. In terms of assembly, homodimer. It depends on Zn(2+) as a cofactor.

Its subcellular location is the cytoplasm. Participates actively in the response to hyperosmotic and heat shock by preventing the aggregation of stress-denatured proteins and by disaggregating proteins, also in an autonomous, DnaK-independent fashion. Unfolded proteins bind initially to DnaJ; upon interaction with the DnaJ-bound protein, DnaK hydrolyzes its bound ATP, resulting in the formation of a stable complex. GrpE releases ADP from DnaK; ATP binding to DnaK triggers the release of the substrate protein, thus completing the reaction cycle. Several rounds of ATP-dependent interactions between DnaJ, DnaK and GrpE are required for fully efficient folding. Also involved, together with DnaK and GrpE, in the DNA replication of plasmids through activation of initiation proteins. The sequence is that of Chaperone protein DnaJ from Staphylococcus epidermidis (strain ATCC 35984 / DSM 28319 / BCRC 17069 / CCUG 31568 / BM 3577 / RP62A).